A 350-amino-acid polypeptide reads, in one-letter code: Putative ATP-binding protein BruAb2_0487 (350 aa).

Positions Val-4–Ile-234 constitute an ABC transporter domain. Residue Gly-36 to Ser-43 coordinates ATP.

The protein belongs to the ABC transporter superfamily. As to quaternary structure, the complex is composed of two ATP-binding proteins (BruAb2_0487), two transmembrane proteins (BruAb2_0483) and a solute-binding protein (BruAb2_0484).

The protein localises to the cell inner membrane. In terms of biological role, probably part of an ABC transporter complex. Probably responsible for energy coupling to the transport system. In Brucella abortus biovar 1 (strain 9-941), this protein is Putative ATP-binding protein BruAb2_0487.